Consider the following 120-residue polypeptide: Large ribosomal subunit protein uL22 (120 aa).

The interval 1–25 is disordered; that stretch reads MFVNKKYTAKGKNLPSSPKKVRPIA.

Belongs to the universal ribosomal protein uL22 family. Part of the 50S ribosomal subunit.

Functionally, this protein binds specifically to 23S rRNA; its binding is stimulated by other ribosomal proteins, e.g. L4, L17, and L20. It is important during the early stages of 50S assembly. It makes multiple contacts with different domains of the 23S rRNA in the assembled 50S subunit and ribosome. Its function is as follows. The globular domain of the protein is located near the polypeptide exit tunnel on the outside of the subunit, while an extended beta-hairpin is found that lines the wall of the exit tunnel in the center of the 70S ribosome. In Borrelia recurrentis (strain A1), this protein is Large ribosomal subunit protein uL22.